Here is a 299-residue protein sequence, read N- to C-terminus: Glycine--tRNA ligase alpha subunit (299 aa).

This sequence belongs to the class-II aminoacyl-tRNA synthetase family. In terms of assembly, tetramer of two alpha and two beta subunits.

The protein localises to the cytoplasm. It catalyses the reaction tRNA(Gly) + glycine + ATP = glycyl-tRNA(Gly) + AMP + diphosphate. The chain is Glycine--tRNA ligase alpha subunit from Pediococcus pentosaceus (strain ATCC 25745 / CCUG 21536 / LMG 10740 / 183-1w).